The primary structure comprises 321 residues: Fibronectin type III domain-containing protein 8 (321 aa).

The region spanning 175-277 is the Fibronectin type-III domain; that stretch reads VPEAPFVCEH…KPYKFATVAT (103 aa).

In Bos taurus (Bovine), this protein is Fibronectin type III domain-containing protein 8 (FNDC8).